The chain runs to 130 residues: Glycoprotein hormone alpha-2 (130 aa).

An N-terminal signal peptide occupies residues 1–22 (MPMAPRVLLFCLLGLAVTEGHG). 4 disulfide bridges follow: cysteine 32/cysteine 90, cysteine 49/cysteine 104, cysteine 58/cysteine 120, and cysteine 62/cysteine 122. Asparagine 38 and asparagine 82 each carry an N-linked (GlcNAc...) asparagine glycan.

The protein belongs to the glycoprotein hormones subunit alpha family. As to quaternary structure, heterodimer with GPHB5; this heterodimer interacts with thyroid-stimulating hormone receptor (TSHR), and hence stimulates cAMP production.

The protein localises to the secreted. Functionally, functions as a heterodimeric glycoprotein hormone with GPHB5 able to bind and activate the thyroid-stimulating hormone receptor (TSHR), leading to increased cAMP production. Plays a central role in controlling thyroid cell metabolism. The sequence is that of Glycoprotein hormone alpha-2 (Gpha2) from Rattus norvegicus (Rat).